The chain runs to 1031 residues: MTVAEIKKLALNNQVFNEAKALLEKGNVIFPKKFLKRKKIIIEVLDGKVFKVQINLKTAAAHLDCSCSNDKQNCVHIIAALLKYNDLKNQDNKEFDLNKADKLECKEVEILIENVSLAIVNGSWKLKIGFVINIDKVQTNTTALRFYCCDNKDVYFLHTEDEQLFRIALDKFNSVERQTLLIFDQLNKTKQMQYENNSLLFNLDQFLSLVKEVKKPSLFLLNEDKTDNILFLRSQHKINGLSHVCGFLNNKVFDFVSYNEKTKQIVLRLAYLNKFTDFKFPYNINIYKLAFGETLFFHFLIHLKMNGFKNIFFQSDVVIVKESEYLPKMFLTIEFNTQKNKFITDAFFKYKNKNSNTLTTVYPHRYYLAQKTNTSNFNRLLFYEQALQRFYEELFQIDYLRRFENIPIKDKNQIALFKTVFDDYKTIDLAELKLTSNLLNYKQLHFSISDIKALKIEDRQLKIEFKAGGIDLKLIKSVLSNYYKGNAICIGEDGWYDLNDENAKALISFWSQIDLRNATCDANNNLLLAKYHLFEVVDTISKYTDVTNLLDEKTALQLKIASENQFHLSLDNNQINNLRKYQKEGVKWIRALEDNQFGGILADEMGLGKTAQVIFAMLDSYQSTKSLLPSLIIVPASLLLNWKSEFQKFAPHVKIVTANGNFKERSQVYESLKNQILLMSFNVLRSDIKWISQKKFHYVVIDEAQGIKNENSTVTKAAKKIKGNFCLALTGTPIENRLLDLWSCFDFVLPNFLGNKKQFSDQFEKEKNDESFQKLMKKTSPFILRRTKNKVLKELPKKIITDIYVELSEEHQKLYDKQKTDGLKEIKESDAKNALNILSLILKLRHICSLVKDNDVNDFEDNSKANAALNIIYEALENKRKVILFTQFLDVIDCFKQTLKNQKIDHLVFDGRKTVKNRNTIIQKFNSAKEPCVMLASLKAGGVGINLTAAEVVIHFDVWWNSAVENQATDRAHRIGQSKTVQVYRIIAKNTIEERVCQVQNQKQELVKKTLVEDVNFFKSLSHEELLKLFE.

The SWIM-type zinc-finger motif lies at 50 to 85 (FKVQINLKTAAAHLDCSCSNDKQNCVHIIAALLKYN). The region spanning 590-751 (RALEDNQFGG…WSCFDFVLPN (162 aa)) is the Helicase ATP-binding domain. Position 603–610 (603–610 (DEMGLGKT)) interacts with ATP. Residues 702–705 (DEAQ) carry the DEAQ box motif. In terms of domain architecture, Helicase C-terminal spans 868–1022 (ALNIIYEALE…EDVNFFKSLS (155 aa)).

This sequence belongs to the SNF2/RAD54 helicase family.

This is an uncharacterized protein from Mycoplasma genitalium (strain ATCC 33530 / DSM 19775 / NCTC 10195 / G37) (Mycoplasmoides genitalium).